The chain runs to 506 residues: Squalene monooxygenase 1,1 (506 aa).

The next 2 helical transmembrane spans lie at 3–23 and 47–67; these read LAFP…WTVF and DADV…YALA. FAD-binding positions include 57–58, 77–78, R85, F90, R157, V173, D336, and M349; these read VG and ER. A helical transmembrane segment spans residues 447–467; sequence LIFHLCGITLSSIGQLLSPFP.

It belongs to the squalene monooxygenase family. FAD serves as cofactor.

The protein resides in the membrane. The enzyme catalyses squalene + reduced [NADPH--hemoprotein reductase] + O2 = (S)-2,3-epoxysqualene + oxidized [NADPH--hemoprotein reductase] + H2O + H(+). It functions in the pathway terpene metabolism; lanosterol biosynthesis; lanosterol from farnesyl diphosphate: step 2/3. Its function is as follows. Catalyzes the stereospecific oxidation of squalene to (S)-2,3-epoxysqualene, and is considered to be a rate-limiting enzyme in steroid biosynthesis. This chain is Squalene monooxygenase 1,1 (SQP1,1), found in Brassica napus (Rape).